We begin with the raw amino-acid sequence, 135 residues long: Holo-[acyl-carrier-protein] synthase (135 aa).

Mg(2+) is bound by residues Asp-7 and Glu-57.

The protein belongs to the P-Pant transferase superfamily. AcpS family. The cofactor is Mg(2+).

It is found in the cytoplasm. The enzyme catalyses apo-[ACP] + CoA = holo-[ACP] + adenosine 3',5'-bisphosphate + H(+). Functionally, transfers the 4'-phosphopantetheine moiety from coenzyme A to a Ser of acyl-carrier-protein. This is Holo-[acyl-carrier-protein] synthase from Corynebacterium glutamicum (strain R).